Consider the following 406-residue polypeptide: Phosphopentomutase (406 aa).

The Mn(2+) site is built by Asp-10, Asp-305, His-310, Asp-346, His-347, and His-358.

It belongs to the phosphopentomutase family. Requires Mn(2+) as cofactor.

The protein resides in the cytoplasm. It carries out the reaction 2-deoxy-alpha-D-ribose 1-phosphate = 2-deoxy-D-ribose 5-phosphate. It catalyses the reaction alpha-D-ribose 1-phosphate = D-ribose 5-phosphate. It functions in the pathway carbohydrate degradation; 2-deoxy-D-ribose 1-phosphate degradation; D-glyceraldehyde 3-phosphate and acetaldehyde from 2-deoxy-alpha-D-ribose 1-phosphate: step 1/2. Isomerase that catalyzes the conversion of deoxy-ribose 1-phosphate (dRib-1-P) and ribose 1-phosphate (Rib-1-P) to deoxy-ribose 5-phosphate (dRib-5-P) and ribose 5-phosphate (Rib-5-P), respectively. The protein is Phosphopentomutase of Photobacterium profundum (strain SS9).